Reading from the N-terminus, the 258-residue chain is MSATPLFKTYDPVEKLISQVGALASGGTGGGTTTNALATTGGTMTGNITMSGTSKITQATAPTVASDVTNKQYVDSAVSAVSAPQMSFAGWKLNNASFFEVNPTTQVKLFTNIDGIGANQWTDTTEDAISVSGGIFSIQNKSTSKTMWYICSAHFTGLSNKTAPTVAGALRFKFNDEDSGNPINSQWCVLRSFSTSNVPSPEASAPQVSGSNMMYATISVPPGTTRRISVIANNPSATDVMQLNQTDDVCQIMITRQS.

It belongs to the IIV-6 219L family.

This is an uncharacterized protein from Aedes vexans (Inland floodwater mosquito).